Here is a 377-residue protein sequence, read N- to C-terminus: Alanine racemase, catabolic (377 aa).

The active-site Proton acceptor; specific for D-alanine is the lysine 51. The residue at position 51 (lysine 51) is an N6-(pyridoxal phosphate)lysine. Arginine 150 is a binding site for substrate. The active-site Proton acceptor; specific for L-alanine is the tyrosine 272. Methionine 320 contributes to the substrate binding site.

It belongs to the alanine racemase family. Requires pyridoxal 5'-phosphate as cofactor.

It carries out the reaction L-alanine = D-alanine. Functionally, isomerizes L-alanine to D-alanine which is then oxidized to pyruvate by DadA. The protein is Alanine racemase, catabolic (dadX) of Rhizobium johnstonii (strain DSM 114642 / LMG 32736 / 3841) (Rhizobium leguminosarum bv. viciae).